Consider the following 241-residue polypeptide: Lysoplasmalogenase TMEM86A (241 aa).

The Cytoplasmic portion of the chain corresponds to 1 to 13 (MVSPVTVVKSEGP). The helical transmembrane segment at 14-30 (KLVPFFKATCVYFVLWL) threads the bilayer. The Extracellular segment spans residues 31–36 (PSSSPS). A helical membrane pass occupies residues 37–59 (WVSALIKCLPIFCLWLFLLAHGV). Residues 60–67 (RFLLAHPS) lie on the Cytoplasmic side of the membrane. The chain crosses the membrane as a helical span at residues 68 to 87 (ASLIFVGLVFSAVGDAFLIW). The Extracellular segment spans residues 88–96 (QDHGYFEHG). A helical membrane pass occupies residues 97 to 113 (LLMFAVAHILYAAAFGM). Over 114 to 119 (RPLALR) the chain is Cytoplasmic. Residues 120–136 (TGLVIGVLSGLCYALLY) traverse the membrane as a helical segment. Over 137 to 142 (PGLSGA) the chain is Extracellular. Residues 143–159 (FTYLVGVYVALISFMGW) traverse the membrane as a helical segment. Over 160–176 (RAMAGLRLVGAAWRWTE) the chain is Cytoplasmic. A helical membrane pass occupies residues 177–195 (LAAGGGALLFILSDLTIAL). At 196–206 (NKFCFPVPYSR) the chain is on the extracellular side. The helical transmembrane segment at 207-225 (ALIMSTYYAAQMLIALSAV) threads the bilayer. The Cytoplasmic portion of the chain corresponds to 226 to 241 (ESREPVGEDYRLSKAD).

It belongs to the TMEM86 family. In terms of tissue distribution, highly expressed in the jejunum, white adipose tissue, kidney and macrophages.

The protein resides in the endoplasmic reticulum membrane. It carries out the reaction a 1-O-(1Z-alkenyl)-sn-glycero-3-phosphocholine + H2O = a 2,3-saturated aldehyde + sn-glycerol 3-phosphocholine. The enzyme catalyses a 1-O-(1Z-alkenyl)-sn-glycero-3-phosphoethanolamine + H2O = a 2,3-saturated aldehyde + sn-glycero-3-phosphoethanolamine. Catalyzes the hydrolysis of the vinyl ether bond of choline or ethanolamine lysoplasmalogens, forming fatty aldehyde and glycerophosphocholine or glycerophosphoethanolamine, respectively and is specific for the sn-2-deacylated (lyso) form of plasmalogen. Plays an important role in lysoplasmalogen metabolism in the adipocyte tissue and macrophages. The sequence is that of Lysoplasmalogenase TMEM86A (Tmem86a) from Mus musculus (Mouse).